Here is a 356-residue protein sequence, read N- to C-terminus: S-adenosylmethionine:tRNA ribosyltransferase-isomerase (356 aa).

The protein belongs to the QueA family. In terms of assembly, monomer.

The protein localises to the cytoplasm. It catalyses the reaction 7-aminomethyl-7-carbaguanosine(34) in tRNA + S-adenosyl-L-methionine = epoxyqueuosine(34) in tRNA + adenine + L-methionine + 2 H(+). It participates in tRNA modification; tRNA-queuosine biosynthesis. Functionally, transfers and isomerizes the ribose moiety from AdoMet to the 7-aminomethyl group of 7-deazaguanine (preQ1-tRNA) to give epoxyqueuosine (oQ-tRNA). In Escherichia coli O81 (strain ED1a), this protein is S-adenosylmethionine:tRNA ribosyltransferase-isomerase.